The chain runs to 637 residues: Glutathione hydrolase 3 (637 aa).

The chain crosses the membrane as a helical span at residues 28–48 (LKISLLLLLILLATSGYYSFS). N50 carries an N-linked (GlcNAc...) asparagine glycan. R147 is an L-glutamate binding site. N-linked (GlcNAc...) asparagine glycosylation is found at N271, N374, and N398. The Nucleophile role is filled by T418. L-glutamate is bound by residues T436, N438, E457, D460, 488 to 489 (SS), and 509 to 510 (GG). N553 is a glycosylation site (N-linked (GlcNAc...) asparagine).

This sequence belongs to the gamma-glutamyltransferase family. In terms of tissue distribution, expressed in roots, cotyledons, leaves, flowers and siliques.

It is found in the vacuole membrane. The enzyme catalyses an N-terminal (5-L-glutamyl)-[peptide] + an alpha-amino acid = 5-L-glutamyl amino acid + an N-terminal L-alpha-aminoacyl-[peptide]. The catalysed reaction is glutathione + H2O = L-cysteinylglycine + L-glutamate. It catalyses the reaction an S-substituted glutathione + H2O = an S-substituted L-cysteinylglycine + L-glutamate. Its pathway is sulfur metabolism; glutathione metabolism. Functionally, may play a role in protecting plants from some xenobiotic chemicals by degrading vacuolar glutathione conjugates into cysteine conjugates. This chain is Glutathione hydrolase 3 (GGT3), found in Arabidopsis thaliana (Mouse-ear cress).